The sequence spans 413 residues: Cell division protein FtsZ 2 (413 aa).

Residues 132–134, Glu171, Arg175, and Asp218 each bind GTP; that span reads GTG.

Belongs to the FtsZ family. As to quaternary structure, homodimer. Polymerizes to form a dynamic ring structure in a strictly GTP-dependent manner. Interacts directly with several other division proteins.

The protein resides in the cytoplasm. Functionally, essential cell division protein that forms a contractile ring structure (Z ring) at the future cell division site. The regulation of the ring assembly controls the timing and the location of cell division. One of the functions of the FtsZ ring is to recruit other cell division proteins to the septum to produce a new cell wall between the dividing cells. Binds GTP and shows GTPase activity. This chain is Cell division protein FtsZ 2, found in Thermococcus kodakarensis (strain ATCC BAA-918 / JCM 12380 / KOD1) (Pyrococcus kodakaraensis (strain KOD1)).